A 229-amino-acid polypeptide reads, in one-letter code: Uracil-DNA glycosylase (229 aa).

The active-site Proton acceptor is the Asp-64.

The protein belongs to the uracil-DNA glycosylase (UDG) superfamily. UNG family.

The protein localises to the cytoplasm. It carries out the reaction Hydrolyzes single-stranded DNA or mismatched double-stranded DNA and polynucleotides, releasing free uracil.. Functionally, excises uracil residues from the DNA which can arise as a result of misincorporation of dUMP residues by DNA polymerase or due to deamination of cytosine. In Escherichia coli O45:K1 (strain S88 / ExPEC), this protein is Uracil-DNA glycosylase.